The primary structure comprises 149 residues: Large ribosomal subunit protein bL20m (149 aa).

The transit peptide at 1–9 (MVFLTTRLW) directs the protein to the mitochondrion.

This sequence belongs to the bacterial ribosomal protein bL20 family. Component of the mitochondrial ribosome large subunit (39S) which comprises a 16S rRNA and about 50 distinct proteins. Interacts with OXA1L.

It localises to the mitochondrion. This chain is Large ribosomal subunit protein bL20m (Mrpl20), found in Mus musculus (Mouse).